Here is a 226-residue protein sequence, read N- to C-terminus: Translation initiation factor IF-3 (226 aa).

A disordered region spans residues 195 to 226 (FVPLAPLSPEDLIEEPELESESDSDAEPESDN). The span at 205-226 (DLIEEPELESESDSDAEPESDN) shows a compositional bias: acidic residues.

This sequence belongs to the IF-3 family. In terms of assembly, monomer.

The protein resides in the cytoplasm. In terms of biological role, IF-3 binds to the 30S ribosomal subunit and shifts the equilibrium between 70S ribosomes and their 50S and 30S subunits in favor of the free subunits, thus enhancing the availability of 30S subunits on which protein synthesis initiation begins. In Chlorobium chlorochromatii (strain CaD3), this protein is Translation initiation factor IF-3.